A 184-amino-acid polypeptide reads, in one-letter code: Threonylcarbamoyl-AMP synthase (184 aa).

The YrdC-like domain occupies 1–184 (MNNLLAVIEL…IFTQHIFRQG (184 aa)).

The protein belongs to the SUA5 family. TsaC subfamily.

Its subcellular location is the cytoplasm. The enzyme catalyses L-threonine + hydrogencarbonate + ATP = L-threonylcarbamoyladenylate + diphosphate + H2O. Functionally, required for the formation of a threonylcarbamoyl group on adenosine at position 37 (t(6)A37) in tRNAs that read codons beginning with adenine. Catalyzes the conversion of L-threonine, HCO(3)(-)/CO(2) and ATP to give threonylcarbamoyl-AMP (TC-AMP) as the acyladenylate intermediate, with the release of diphosphate. In Haemophilus ducreyi (strain 35000HP / ATCC 700724), this protein is Threonylcarbamoyl-AMP synthase.